The sequence spans 738 residues: Putative RNA-binding protein EEED8.10 (738 aa).

The RRM domain maps to 112–201 (RKIVVSNISA…QVMVVSAYVS (90 aa)). Residues 211-237 (LSDDVGSREDTPLSRASSTQSLASGSE) are disordered. Positions 224–237 (SRASSTQSLASGSE) are enriched in polar residues. One can recognise an F-box domain in the interval 239 to 297 (SFNLGNVPDKILRRVISFLPIHETIRLERVNKKFMEESIKSWELVNKIALARETVFNKQ).

In Caenorhabditis elegans, this protein is Putative RNA-binding protein EEED8.10.